Consider the following 954-residue polypeptide: Kinesin-like protein KIN-14Q (954 aa).

The Calponin-homology (CH) domain occupies 33-155 (AMRRYDAASW…CVLALKSFSE (123 aa)). Residues 374–699 (NIRVYCRVRP…LKFAERVASV (326 aa)) form the Kinesin motor domain. 457-464 (GQTGSGKT) lines the ATP pocket. Residues 704 to 733 (AKANKEGSEVRELKEQIATLKAALAKKEGE) adopt a coiled-coil conformation. Residues 844–855 (YDPDKQRRRAEP) show a composition bias toward basic and acidic residues. 2 disordered regions span residues 844-876 (YDPD…DQEM) and 912-954 (PNLA…NTPK). Over residues 864 to 873 (FDAATSSPSD) the composition is skewed to low complexity. Polar residues predominate over residues 928-954 (PIRNSKQLPFSTTGGRRTRNGKINTPK).

Belongs to the TRAFAC class myosin-kinesin ATPase superfamily. Kinesin family. KIN-14 subfamily. In terms of assembly, forms oligomers in vitro. Interacts with actin microfilaments. Binds to actin in vitro through its calponin-homology (CH) domain. As to expression, expressed in primary leaf, primary root, developing flower and coleoptile.

The protein resides in the cytoplasm. It localises to the cytoskeleton. With respect to regulation, the microtubule-dependent ATPase activity is regulated by actin binding. Minus end-directed motor protein that transports actin filaments along microtubules. Plays a central role in the polar orientation of actin filaments along microtubules, and thus a contribution to the organization of the cytoskeletal architecture. Links the actin microfilaments with the cortical microtubules in both cycling and non-cycling cells. Required for efficient cell elongation by its participation in the premitotic nuclear positioning. This is Kinesin-like protein KIN-14Q from Oryza sativa subsp. japonica (Rice).